The primary structure comprises 362 residues: sn-glycerol-3-phosphate import ATP-binding protein UgpC (362 aa).

The ABC transporter domain occupies 4–235 (LKLQAVTKSY…PATLFVASFI (232 aa)). 37 to 44 (GPSGCGKS) contributes to the ATP binding site.

This sequence belongs to the ABC transporter superfamily. sn-glycerol-3-phosphate importer (TC 3.A.1.1.3) family. The complex is composed of two ATP-binding proteins (UgpC), two transmembrane proteins (UgpA and UgpE) and a solute-binding protein (UgpB).

It localises to the cell inner membrane. It carries out the reaction sn-glycerol 3-phosphate(out) + ATP + H2O = sn-glycerol 3-phosphate(in) + ADP + phosphate + H(+). Its function is as follows. Part of the ABC transporter complex UgpBAEC involved in sn-glycerol-3-phosphate (G3P) import. Responsible for energy coupling to the transport system. This chain is sn-glycerol-3-phosphate import ATP-binding protein UgpC, found in Yersinia enterocolitica serotype O:8 / biotype 1B (strain NCTC 13174 / 8081).